Consider the following 299-residue polypeptide: Peroxisomal biogenesis factor 19 (299 aa).

The disordered stretch occupies residues Met1–Leu63. Ala2 bears the N-acetylalanine mark. The docking to the peroxisome membrane and binding to PEX3 stretch occupies residues Ala2 to Gly56. Residues Ala2–Met91 form a necessary for PEX19 function on peroxisome biogenesis region. Residues Arg16–Asp27 are compositionally biased toward acidic residues. A phosphoserine mark is found at Ser35, Ser54, and Ser66. Thr236 carries the phosphothreonine modification. Position 296 is a cysteine methyl ester (Cys296). Residue Cys296 is the site of S-farnesyl cysteine attachment. The propeptide at Leu297–Met299 is removed in mature form.

It belongs to the peroxin-19 family. As to quaternary structure, interacts with a broad range of peroxisomal membrane proteins, including PEX3, PEX10, PEX11A, PEX11B, PEX12, PEX13, PEX14 and PEX16, PXMP2/PMP22, PXMP4/PMP24, SLC25A17/PMP34, ABCD1/ALDP, ABCD2/ALDRP, and ABCD3/PMP70. Also interacts with the tumor suppressor CDKN2A/p19ARF. In terms of assembly, (Microbial infection) Interacts with human cytomegalovirus protein UL37 isoform vMIA; this interaction inhibits the peroxisomal-dependent antiviral signaling. As to expression, ubiquitously expressed. Isoform 1 is strongly predominant in all tissues except in utero where isoform 2 is the main form.

The protein resides in the cytoplasm. It localises to the peroxisome membrane. Functionally, necessary for early peroxisomal biogenesis. Acts both as a cytosolic chaperone and as an import receptor for peroxisomal membrane proteins (PMPs). Binds and stabilizes newly synthesized PMPs in the cytoplasm by interacting with their hydrophobic membrane-spanning domains, and targets them to the peroxisome membrane by binding to the integral membrane protein PEX3. Excludes CDKN2A from the nucleus and prevents its interaction with MDM2, which results in active degradation of TP53. This chain is Peroxisomal biogenesis factor 19, found in Homo sapiens (Human).